The following is a 493-amino-acid chain: Glutamate--tRNA ligase (493 aa).

A 'HIGH' region motif is present at residues 9-19 (PSPTGFVHIGS). The 'KMSKS' region motif lies at 258 to 262 (KLSKR). Lys261 serves as a coordination point for ATP.

Belongs to the class-I aminoacyl-tRNA synthetase family. Glutamate--tRNA ligase type 1 subfamily. In terms of assembly, monomer.

The protein localises to the cytoplasm. The catalysed reaction is tRNA(Glu) + L-glutamate + ATP = L-glutamyl-tRNA(Glu) + AMP + diphosphate. Catalyzes the attachment of glutamate to tRNA(Glu) in a two-step reaction: glutamate is first activated by ATP to form Glu-AMP and then transferred to the acceptor end of tRNA(Glu). This is Glutamate--tRNA ligase from Clostridioides difficile (strain 630) (Peptoclostridium difficile).